Here is a 296-residue protein sequence, read N- to C-terminus: Decaprenyl diphosphate synthase (296 aa).

The tract at residues 1–58 (MVRNERTLKSTDFPQLPPAPDDYPTFPDKSTWPVVFPMLPPSPDGGPRRPPQHTSKAV) is disordered. Aspartate 76 is an active-site residue. A Mg(2+)-binding site is contributed by aspartate 76. Substrate contacts are provided by residues 77-80 (GNGR), tryptophan 81, arginine 89, histidine 93, and 121-123 (STE). Asparagine 124 functions as the Proton acceptor in the catalytic mechanism. Substrate is bound by residues tryptophan 125, arginine 127, arginine 244, and 250–252 (RSS). Glutamate 263 is a binding site for Mg(2+).

Belongs to the UPP synthase family. Homodimer. Mg(2+) is required as a cofactor.

It localises to the cell membrane. The enzyme catalyses (2Z,6E)-farnesyl diphosphate + 7 isopentenyl diphosphate = (2Z,6Z,10Z,14Z,18Z,22Z,26Z,30Z,34E)-decaprenyl diphosphate + 7 diphosphate. It carries out the reaction n isopentenyl diphosphate + (2E,6E)-farnesyl diphosphate = a di-trans,poly-cis-polyprenyl diphosphate + n diphosphate. Functionally, catalyzes the sequential condensation of isopentenyl diphosphate (IPP) in the cis configuration with (2Z,6E)-farnesyl diphosphate (Z-FPP or EZ-FPP) generating the 50 carbon product trans,polycis-decaprenyl diphosphate. When (2E,6E)-farnesyl diphosphate (E-FPP or EE-FPP) is used in vitro, both primary products decaprenyl diphosphate and (2E,6E,10E)-geranylgeranyl diphosphate (EEE-GGPP) are synthesized. M.tuberculosis does not synthesize (2E,6E,10Z)-geranylgeranyl diphosphate (EEZ-GGPP) and heptaprenyl diphosphate. Can also accept many different allylic substrates, including E-geranyl diphosphate (E-GPP), neryl diphosphate (NPP), and all-trans-geranyl-geranyl diphosphate. This is Decaprenyl diphosphate synthase (uppS) from Mycobacterium leprae (strain TN).